Consider the following 78-residue polypeptide: Acyl carrier protein (78 aa).

Positions Ser2–Gln77 constitute a Carrier domain. Residue Ser37 is modified to O-(pantetheine 4'-phosphoryl)serine.

This sequence belongs to the acyl carrier protein (ACP) family. 4'-phosphopantetheine is transferred from CoA to a specific serine of apo-ACP by AcpS. This modification is essential for activity because fatty acids are bound in thioester linkage to the sulfhydryl of the prosthetic group.

The protein resides in the cytoplasm. Its pathway is lipid metabolism; fatty acid biosynthesis. Its function is as follows. Carrier of the growing fatty acid chain in fatty acid biosynthesis. This Pseudomonas putida (strain ATCC 47054 / DSM 6125 / CFBP 8728 / NCIMB 11950 / KT2440) protein is Acyl carrier protein.